The chain runs to 340 residues: MRKELQLSLSVTLLLVCGFLYQFTLKSSCLFCLPSFKSHQGLEALLSHRRGIVFLETSERMEPPHLVSCSVESAAKIYPEWPVVFFMKGLTDSTPMPSNSTYPAFSFLSAIDNVFLFPLDMKRLLEDTPLFSWYNQINASAERNWLHISSDASRLAIIWKYGGIYMDTDVISIRPIPEENFLAAQASRYSSNGIFGFLPHHPFLWECMENFVEHYNSAIWGNQGPELMTRMLRVWCKLEDFQEVSDLRCLNISFLHPQRFYPISYREWRRYYEVWDTEPSFNVSYALHLWNHMNQEGRAVIRGSNTLVENLYRKHCPRTYRDLIKGPEGSVTGELGPGNK.

Residues 1 to 4 lie on the Cytoplasmic side of the membrane; it reads MRKE. Residues 5–25 form a helical; Signal-anchor for type II membrane protein membrane-spanning segment; it reads LQLSLSVTLLLVCGFLYQFTL. Topologically, residues 26-340 are lumenal; the sequence is KSSCLFCLPS…VTGELGPGNK (315 aa). Asparagine 99 and asparagine 138 each carry an N-linked (GlcNAc...) asparagine glycan. A DXD motif motif is present at residues 167–169; it reads DTD. N-linked (GlcNAc...) asparagine glycosylation is found at asparagine 251 and asparagine 282.

It belongs to the glycosyltransferase 32 family. As to expression, detected in stomach and pancreas.

The protein localises to the golgi apparatus membrane. It functions in the pathway protein modification; protein glycosylation. In terms of biological role, catalyzes the transfer of N-acetylglucosamine (GlcNAc) to core 2 branched O-glycans. Necessary for the synthesis of type III mucin which is specifically produced in the stomach, duodenum, and pancreatic duct. May protect against inflammation-associated gastric adenocarcinomas. In Homo sapiens (Human), this protein is Alpha-1,4-N-acetylglucosaminyltransferase (A4GNT).